Consider the following 71-residue polypeptide: Conotoxin Vc6.12 (71 aa).

The N-terminal stretch at 1 to 19 (MQKLIILLLVAAVLMSTQA) is a signal peptide. The propeptide occupies 20–43 (LFQEKRPMKKINFLSKGKTDAEKQ). 3 disulfides stabilise this stretch: cysteine 48–cysteine 62, cysteine 55–cysteine 66, and cysteine 61–cysteine 70.

It belongs to the conotoxin O2 superfamily. Expressed by the venom duct.

It localises to the secreted. Functionally, inhibits voltage-gated ion channels. In Conus victoriae (Queen Victoria cone), this protein is Conotoxin Vc6.12.